The chain runs to 417 residues: MFIDSEYSSFLIINVTFFAVKLLQFGLVWLAPRTFDTSTHLFLEHYGITSNPWWGKLLSWDSIFFLKTSLWMRNSGYSAPQYEHEWAFSPIWSIIIQSSDLQHIVLKAVSFNLLLHYLSTWIVYALTKLTFPPFGQNVQTKLALTTSVLFILSSAAGFLISVYSEPIAFTFSLLGMLFRQWSISFDVYGNLHMDKLKWISYLLSSFCFAFAFLNRSNCLLLGLFYVHDCLNLFKQKKWITSIFYPILSGTILFGVFVYFHYYFPYAALCPERGEWCNSKIYGLPIPYQSLYSYIQSKHWNVGFLKYWTPNNIPNFLFGLPNIVITWNAITYFSYQYPSRNMKPYIWIARIFLFIMVFLANVQIINRVSSFLPLSLWYISDSLIKNPHEMRIVKYYVMWLLIWIPTQTALFACFLPPA.

9 helical membrane-spanning segments follow: residues 10 to 30 (FLII…LVWL), 104 to 124 (IVLK…WIVY), 142 to 162 (LALT…LISV), 167 to 187 (IAFT…SFDV), 206 to 226 (FCFA…LFYV), 239 to 259 (ITSI…FVYF), 312 to 332 (IPNF…ITYF), 344 to 364 (YIWI…VQII), and 394 to 414 (YYVM…ACFL).

The protein belongs to the PIGV family.

It localises to the endoplasmic reticulum membrane. Its pathway is glycolipid biosynthesis; glycosylphosphatidylinositol-anchor biosynthesis. In terms of biological role, mannosyltransferase involved in glycosylphosphatidylinositol-anchor biosynthesis. Transfers the second mannose to the glycosylphosphatidylinositol during GPI precursor assembly. The chain is GPI mannosyltransferase 2 (GPI18) from Kluyveromyces lactis (strain ATCC 8585 / CBS 2359 / DSM 70799 / NBRC 1267 / NRRL Y-1140 / WM37) (Yeast).